Consider the following 116-residue polypeptide: Protein Rev (116 aa).

Phosphoserine; by host CK2 occurs at positions 5 and 8. The tract at residues 18-26 is homomultimerization; that stretch reads LIKFLYQSN. A disordered region spans residues 25-49; the sequence is SNPPPSLEGTRQARRNRRRRWRERQ. A Nuclear localization signal and RNA-binding (RRE) motif is present at residues 34–50; sequence TRQARRNRRRRWRERQR. Basic residues predominate over residues 36–47; it reads QARRNRRRRWRE. The short motif at 73-84 is the Nuclear export signal and binding to XPO1 element; it reads LPLPPLEKLTLD. A phosphoserine; by host mark is found at S92 and S99. Positions 92–116 are disordered; the sequence is SGTQGVGSPQILVESPAILEPGTKE.

It belongs to the HIV-1 REV protein family. As to quaternary structure, homomultimer; when bound to the RRE. Multimeric assembly is essential for activity and may involve XPO1. Binds to human KPNB1, XPO1, TNPO1, RANBP5 and IPO7. Interacts with the viral Integrase. Interacts with human KHDRBS1. Interacts with human NAP1; this interaction decreases Rev multimerization and stimulates its activity. Interacts with human DEAD-box helicases DDX3 and DDX24; these interactions may serve for viral RNA export to the cytoplasm and packaging, respectively. Interacts with human PSIP1; this interaction may inhibit HIV-1 DNA integration by promoting dissociation of the Integrase-LEDGF/p75 complex. In terms of processing, asymmetrically arginine dimethylated at one site by host PRMT6. Methylation impairs the RNA-binding activity and export of viral RNA from the nucleus to the cytoplasm. Post-translationally, phosphorylated by protein kinase CK2. Presence of, and maybe binding to the N-terminus of the regulatory beta subunit of CK2 is necessary for CK2-mediated Rev's phosphorylation.

The protein localises to the host nucleus. The protein resides in the host nucleolus. It localises to the host cytoplasm. Escorts unspliced or incompletely spliced viral pre-mRNAs (late transcripts) out of the nucleus of infected cells. These pre-mRNAs carry a recognition sequence called Rev responsive element (RRE) located in the env gene, that is not present in fully spliced viral mRNAs (early transcripts). This function is essential since most viral proteins are translated from unspliced or partially spliced pre-mRNAs which cannot exit the nucleus by the pathway used by fully processed cellular mRNAs. Rev itself is translated from a fully spliced mRNA that readily exits the nucleus. Rev's nuclear localization signal (NLS) binds directly to KPNB1/Importin beta-1 without previous binding to KPNA1/Importin alpha-1. KPNB1 binds to the GDP bound form of RAN (Ran-GDP) and targets Rev to the nucleus. In the nucleus, the conversion from Ran-GDP to Ran-GTP dissociates Rev from KPNB1 and allows Rev's binding to the RRE in viral pre-mRNAs. Rev multimerization on the RRE via cooperative assembly exposes its nuclear export signal (NES) to the surface. Rev can then form a complex with XPO1/CRM1 and Ran-GTP, leading to nuclear export of the complex. Conversion from Ran-GTP to Ran-GDP mediates dissociation of the Rev/RRE/XPO1/RAN complex, so that Rev can return to the nucleus for a subsequent round of export. Beside KPNB1, also seems to interact with TNPO1/Transportin-1, RANBP5/IPO5 and IPO7/RANBP7 for nuclear import. The nucleoporin-like HRB/RIP is an essential cofactor that probably indirectly interacts with Rev to release HIV RNAs from the perinuclear region to the cytoplasm. In Human immunodeficiency virus type 1 group M subtype B (strain 89.6) (HIV-1), this protein is Protein Rev.